The chain runs to 370 residues: tRNA-specific 2-thiouridylase MnmA (370 aa).

ATP is bound by residues 9 to 16 and M35; that span reads GMSGGVDS. An interaction with target base in tRNA region spans residues 95-97; that stretch reads NPD. Residue C100 is the Nucleophile of the active site. The cysteines at positions 100 and 196 are disulfide-linked. Residue G124 coordinates ATP. Residues 146 to 148 are interaction with tRNA; it reads KDQ. C196 (cysteine persulfide intermediate) is an active-site residue. The interaction with tRNA stretch occupies residues 308–309; the sequence is RY.

It belongs to the MnmA/TRMU family.

It localises to the cytoplasm. The enzyme catalyses S-sulfanyl-L-cysteinyl-[protein] + uridine(34) in tRNA + AH2 + ATP = 2-thiouridine(34) in tRNA + L-cysteinyl-[protein] + A + AMP + diphosphate + H(+). Catalyzes the 2-thiolation of uridine at the wobble position (U34) of tRNA, leading to the formation of s(2)U34. The chain is tRNA-specific 2-thiouridylase MnmA from Ralstonia pickettii (strain 12J).